The sequence spans 297 residues: 33 kDa chaperonin (297 aa).

2 disulfides stabilise this stretch: Cys233–Cys235 and Cys267–Cys270.

The protein belongs to the HSP33 family. Post-translationally, under oxidizing conditions two disulfide bonds are formed involving the reactive cysteines. Under reducing conditions zinc is bound to the reactive cysteines and the protein is inactive.

It is found in the cytoplasm. Functionally, redox regulated molecular chaperone. Protects both thermally unfolding and oxidatively damaged proteins from irreversible aggregation. Plays an important role in the bacterial defense system toward oxidative stress. The protein is 33 kDa chaperonin of Haemophilus ducreyi (strain 35000HP / ATCC 700724).